Reading from the N-terminus, the 267-residue chain is Type III pantothenate kinase (267 aa).

Asp6 to Thr13 is a binding site for ATP. Substrate is bound at residue Gly109–Arg112. Asp111 acts as the Proton acceptor in catalysis. Residue Asp131 coordinates K(+). ATP is bound at residue Ser134. A substrate-binding site is contributed by Thr186.

The protein belongs to the type III pantothenate kinase family. In terms of assembly, homodimer. It depends on NH4(+) as a cofactor. K(+) is required as a cofactor.

It is found in the cytoplasm. It carries out the reaction (R)-pantothenate + ATP = (R)-4'-phosphopantothenate + ADP + H(+). Its pathway is cofactor biosynthesis; coenzyme A biosynthesis; CoA from (R)-pantothenate: step 1/5. Functionally, catalyzes the phosphorylation of pantothenate (Pan), the first step in CoA biosynthesis. The protein is Type III pantothenate kinase of Mycobacterium sp. (strain JLS).